We begin with the raw amino-acid sequence, 365 residues long: 5-hydroxytryptamine receptor 1F (365 aa).

At 1–24 (MDFLNSSDQNLTSEELLNRMPSKI) the chain is on the extracellular side. N-linked (GlcNAc...) asparagine glycosylation is found at Asn5 and Asn10. Residues 25–49 (LVSLTLSGLALMTTTINSLVIAAII) traverse the membrane as a helical segment. The Cytoplasmic segment spans residues 50 to 59 (VTRKLHHPAN). The chain crosses the membrane as a helical span at residues 60-81 (YLICSLAVTDFLVAVLVMPFSI). Residues 82-96 (VYIVRESWIMGQVVC) are Extracellular-facing. A disulfide bridge links Cys96 with Cys172. A helical membrane pass occupies residues 97–119 (DIWLSVDITCCTCSILHLSAIAL). Residues Asp103 and Cys107 each contribute to the serotonin site. The DRY motif; important for ligand-induced conformation changes signature appears at 120–122 (DRY). At 120-139 (DRYRAITDAVEYARKRTPKH) the chain is on the cytoplasmic side. Residues 140–159 (AGIMITIVWIISVFISMPPL) form a helical membrane-spanning segment. Residues 160 to 178 (FWRHQGTSRDDECIIKHDH) are Extracellular-facing. A helical membrane pass occupies residues 179-202 (IVSTIYSTFGAFYIPLALILILYY). Residues 203–291 (KIYRAAKTLY…KISGTRERKA (89 aa)) lie on the Cytoplasmic side of the membrane. The helical transmembrane segment at 292-315 (ATTLGLILGAFVICWLPFFVKELV) threads the bilayer. The Extracellular segment spans residues 316–327 (VNVCDKCKISEE). The chain crosses the membrane as a helical span at residues 328–350 (MSNFLAWLGYLNSLINPLIYTIF). The short motif at 343–347 (NPLIY) is the NPxxY motif; important for ligand-induced conformation changes and signaling element. Residues 351 to 365 (NEDFKKAFQKLVRCR) are Cytoplasmic-facing.

It belongs to the G-protein coupled receptor 1 family.

The protein localises to the cell membrane. G-protein coupled receptor for 5-hydroxytryptamine (serotonin). Also functions as a receptor for various alkaloids and psychoactive substances. Ligand binding causes a conformation change that triggers signaling via guanine nucleotide-binding proteins (G proteins) and modulates the activity of downstream effectors, such as adenylate cyclase. HTR1F is coupled to G(i)/G(o) G alpha proteins and mediates inhibitory neurotransmission by inhibiting adenylate cyclase activity. In Pan troglodytes (Chimpanzee), this protein is 5-hydroxytryptamine receptor 1F (HTR1F).